The primary structure comprises 113 residues: TYRO protein tyrosine kinase-binding protein (113 aa).

An N-terminal signal peptide occupies residues 1–21 (MGGLEPCSRLLLLPLLLAVSG). The Extracellular segment spans residues 22–40 (LRPVQAQAQSDCSCSTVSP). Residues 41-61 (GVLAGIVMGDLVLTVLIALAV) traverse the membrane as a helical segment. A Ca(2+)-binding site is contributed by aspartate 50. Residues 62–113 (YFLGRLVPRGRGAAEAATRKQRITETESPYQELQGQRSDVYSDLNTQRPYYK) lie on the Cytoplasmic side of the membrane. The disordered stretch occupies residues 75 to 113 (AEAATRKQRITETESPYQELQGQRSDVYSDLNTQRPYYK). The ITAM domain occupies 80–108 (RKQRITETESPYQELQGQRSDVYSDLNTQ). Over residues 87-113 (TESPYQELQGQRSDVYSDLNTQRPYYK) the composition is skewed to polar residues. Residues tyrosine 91 and tyrosine 102 each carry the phosphotyrosine modification.

It belongs to the TYROBP family. Homodimer; disulfide-linked. Homotrimer; disulfide-linked. Homotetramer; disulfide-linked. Homotrimers and homotetramers form when low levels of partner receptors are available and are competitive with assembly with interacting receptors. They may represent alternative oligomerization states or may be intermediates in the receptor assembly process. Binding of a metal cation aids in homooligomerization through coordination of the metal ion by the subunits of the oligomer. Interacts with TREM1. Interacts with TREM2. Interacts with SIRPB1. Interacts with CLECSF5. Interacts with SIGLEC14. Interacts with CD300LB and CD300E. Interacts with CD300C2. Interacts (via ITAM domain) with SYK (via SH2 domains); activates SYK mediating neutrophil and macrophage integrin-mediated activation. Interacts with KLRC2, KIR2DS3 and KIR2DS5. Interacts with CD300H. Interacts with KIR2DS1. Interacts with KLRD1. Interacts with SIGLEC1. Following ligand binding by associated receptors, tyrosine phosphorylated in the ITAM domain which leads to activation of additional tyrosine kinases and subsequent cell activation. In terms of tissue distribution, expressed at low levels in the early development of the hematopoietic system and in the promonocytic stage and at high levels in mature monocytes. Expressed in hematological cells and tissues such as peripheral blood leukocytes and spleen. Also found in bone marrow, lymph nodes, placenta, lung and liver. Expressed at lower levels in different parts of the brain especially in the basal ganglia and corpus callosum.

The protein localises to the cell membrane. Its function is as follows. Adapter protein which non-covalently associates with activating receptors found on the surface of a variety of immune cells to mediate signaling and cell activation following ligand binding by the receptors. TYROBP is tyrosine-phosphorylated in the ITAM domain following ligand binding by the associated receptors which leads to activation of additional tyrosine kinases and subsequent cell activation. Also has an inhibitory role in some cells. Non-covalently associates with activating receptors of the CD300 family to mediate cell activation. Also mediates cell activation through association with activating receptors of the CD200R family. Required for neutrophil activation mediated by integrin. Required for the activation of myeloid cells mediated by the CLEC5A/MDL1 receptor. Associates with natural killer (NK) cell receptors such as KIR2DS2 and the KLRD1/KLRC2 heterodimer to mediate NK cell activation. Also enhances trafficking and cell surface expression of NK cell receptors KIR2DS1, KIR2DS2 and KIR2DS4 and ensures their stability at the cell surface. Associates with SIRPB1 to mediate activation of myeloid cells such as monocytes and dendritic cells. Associates with TREM1 to mediate activation of neutrophils and monocytes. Associates with TREM2 on monocyte-derived dendritic cells to mediate up-regulation of chemokine receptor CCR7 and dendritic cell maturation and survival. Association with TREM2 mediates cytokine-induced formation of multinucleated giant cells which are formed by the fusion of macrophages. Stabilizes the TREM2 C-terminal fragment (TREM2-CTF) produced by TREM2 ectodomain shedding which suppresses the release of pro-inflammatory cytokines. In microglia, required with TREM2 for phagocytosis of apoptotic neurons. Required with ITGAM/CD11B in microglia to control production of microglial superoxide ions which promote the neuronal apoptosis that occurs during brain development. Promotes pro-inflammatory responses in microglia following nerve injury which accelerates degeneration of injured neurons. Positively regulates the expression of the IRAK3/IRAK-M kinase and IL10 production by liver dendritic cells and inhibits their T cell allostimulatory ability. Negatively regulates B cell proliferation. Required for CSF1-mediated osteoclast cytoskeletal organization. Positively regulates multinucleation during osteoclast development. This chain is TYRO protein tyrosine kinase-binding protein, found in Homo sapiens (Human).